We begin with the raw amino-acid sequence, 320 residues long: Protein U25 (320 aa).

This sequence belongs to the herpesviridae US22 family.

The sequence is that of Protein U25 (U25) from Human herpesvirus 7 (strain JI) (HHV-7).